Here is a 143-residue protein sequence, read N- to C-terminus: MLDSDARLASDLSLAVMRLSRQLRFRNPSSPVSLSQLSALTTLANEGAMTPGALAIRERVRPPSMTRVIASLADMGFVDRAPHPIDGRQVLVSVSESGAELVKAARRARQEWLAERLATLNRSERDILRSAADLMLALVDESP.

An HTH marR-type domain is found at 5-137 (DARLASDLSL…LRSAADLMLA (133 aa)). Residues 51 to 74 (PGALAIRERVRPPSMTRVIASLAD) constitute a DNA-binding region (H-T-H motif).

In terms of assembly, homodimer.

This is an uncharacterized protein from Mycobacterium bovis (strain ATCC BAA-935 / AF2122/97).